Reading from the N-terminus, the 213-residue chain is Ephrin-A2 (213 aa).

A signal peptide spans 1–24 (MAPAQRPLLPLLLLLLPLPPPPFA). The Ephrin RBD domain maps to 34 to 174 (SDRYAVYWNR…RLKVYVRPTN (141 aa)). A glycan (N-linked (GlcNAc...) asparagine) is linked at Asn42. Cystine bridges form between Cys73–Cys114 and Cys102–Cys163. N-linked (GlcNAc...) asparagine glycosylation is found at Asn174 and Asn188. A lipid anchor (GPI-anchor amidated asparagine) is attached at Asn188. The propeptide at 189–213 (NSCSSPGGCRLFLSTIPVLWTLLGS) is removed in mature form.

The protein belongs to the ephrin family. In terms of assembly, binds to the receptor tyrosine kinases EPHA3, EPHA4 and EPHA5. Interacts with EPHA8; activates EPHA8.

It is found in the cell membrane. Its function is as follows. Cell surface GPI-bound ligand for Eph receptors, a family of receptor tyrosine kinases which are crucial for migration, repulsion and adhesion during neuronal, vascular and epithelial development. Binds promiscuously Eph receptors residing on adjacent cells, leading to contact-dependent bidirectional signaling into neighboring cells. The signaling pathway downstream of the receptor is referred to as forward signaling while the signaling pathway downstream of the ephrin ligand is referred to as reverse signaling. With the EPHA2 receptor may play a role in bone remodeling through regulation of osteoclastogenesis and osteoblastogenesis. The polypeptide is Ephrin-A2 (EFNA2) (Homo sapiens (Human)).